The primary structure comprises 116 residues: U16-barytoxin-Tl1d (116 aa).

The N-terminal stretch at 1–20 is a signal peptide; that stretch reads MKTIIVFLSLLVLATKFGDA. Residues 21-74 constitute a propeptide that is removed on maturation; the sequence is NEGVNQEQMKEVIQNEFREDFLNEMAAMSLLQQLEAIESTLLEKEADRNSRQKR. 3 disulfide bridges follow: cysteine 75/cysteine 90, cysteine 82/cysteine 95, and cysteine 89/cysteine 110.

Belongs to the neurotoxin 14 (magi-1) family. 06 (ICK-Trit) subfamily. Expressed by the venom gland.

It is found in the secreted. In terms of biological role, ion channel inhibitor. This is U16-barytoxin-Tl1d from Trittame loki (Brush-footed trapdoor spider).